We begin with the raw amino-acid sequence, 314 residues long: Olfactory receptor 5P62 (314 aa).

The Extracellular portion of the chain corresponds to 1–28 (MAFIYNGSQTTVTEFILLGLTDDPVLKV). N6 is a glycosylation site (N-linked (GlcNAc...) asparagine). Residues 29–49 (ILFCIILCIYLVTVFGNLSTI) form a helical membrane-spanning segment. Over 50–57 (LLIGVSSK) the chain is Cytoplasmic. The chain crosses the membrane as a helical span at residues 58-78 (LHHPMYFFLSHLASVDMGLSS). Residues 79–102 (SVTPNMLVNFLTEKNTISYLGCGI) are Extracellular-facing. A disulfide bridge connects residues C100 and C192. A helical transmembrane segment spans residues 103–123 (QLSSAAFFGAVEFFLLAAMAY). The Cytoplasmic portion of the chain corresponds to 124-136 (DRLVAICNPLLYS). Residues 137–157 (TKMSSQVCIQLVAGSYVGGFL) traverse the membrane as a helical segment. Residues 158–199 (NASFVTHFFFSFLFCGPNRVNHFFCDLSPMMELSCSDVSISE) are Extracellular-facing. Residues 200 to 220 (IVISFSAGSFTMTTLFVIVIP) traverse the membrane as a helical segment. Over 221–240 (YFYIFITILKIRSTEGRQKA) the chain is Cytoplasmic. A helical membrane pass occupies residues 241–261 (FSTCTSHLTAVTLYYGTIIFI). Over 262–274 (YVMPKSTYSRDQN) the chain is Extracellular. The chain crosses the membrane as a helical span at residues 275–295 (KVVSLFYMLVIPVLNPLIYSL). Residues 296-314 (RNNEIKDALKRQFYRKTLL) lie on the Cytoplasmic side of the membrane.

The protein belongs to the G-protein coupled receptor 1 family.

It is found in the cell membrane. In terms of biological role, potential odorant receptor. The protein is Olfactory receptor 5P62 of Mus musculus (Mouse).